The chain runs to 637 residues: Probable potassium transport system protein Kup 2 (637 aa).

12 helical membrane passes run 18-38, 61-81, 107-127, 145-165, 174-194, 211-231, 255-275, 293-313, 345-365, 371-391, 402-422, and 429-449; these read FLVL…TSPL, LISL…VLFL, MPVL…DAMI, PAFS…LFAV, AVFF…GGLI, ALWF…AVFL, WFIL…ALVL, ALFP…QAVI, IYVP…IFSF, LATA…LMAF, AFTA…FLAA, and DGGW…WTWT.

Belongs to the HAK/KUP transporter (TC 2.A.72) family.

It is found in the cell inner membrane. It catalyses the reaction K(+)(in) + H(+)(in) = K(+)(out) + H(+)(out). In terms of biological role, transport of potassium into the cell. Likely operates as a K(+):H(+) symporter. The polypeptide is Probable potassium transport system protein Kup 2 (Agrobacterium fabrum (strain C58 / ATCC 33970) (Agrobacterium tumefaciens (strain C58))).